The sequence spans 390 residues: Galactokinase (390 aa).

Position 35 to 38 (35 to 38) interacts with substrate; sequence EHTD. Residue 125–131 coordinates ATP; sequence GAGLSSS. Residues Ser131 and Glu163 each contribute to the Mg(2+) site. Residue Asp175 is the Proton acceptor of the active site. Tyr224 contributes to the substrate binding site.

This sequence belongs to the GHMP kinase family. GalK subfamily.

Its subcellular location is the cytoplasm. It catalyses the reaction alpha-D-galactose + ATP = alpha-D-galactose 1-phosphate + ADP + H(+). Its pathway is carbohydrate metabolism; galactose metabolism. In terms of biological role, catalyzes the transfer of the gamma-phosphate of ATP to D-galactose to form alpha-D-galactose-1-phosphate (Gal-1-P). This Proteus mirabilis (strain HI4320) protein is Galactokinase.